The following is a 406-amino-acid chain: Imidazolonepropionase (406 aa).

His-72 and His-74 together coordinate Fe(3+). Zn(2+) contacts are provided by His-72 and His-74. 3 residues coordinate 4-imidazolone-5-propanoate: Arg-81, Tyr-144, and His-177. Tyr-144 contacts N-formimidoyl-L-glutamate. His-242 lines the Fe(3+) pocket. His-242 lines the Zn(2+) pocket. 4-imidazolone-5-propanoate is bound at residue Gln-245. Asp-317 contacts Fe(3+). Asp-317 lines the Zn(2+) pocket. N-formimidoyl-L-glutamate is bound by residues Asn-319 and Gly-321. Residue Thr-322 participates in 4-imidazolone-5-propanoate binding.

It belongs to the metallo-dependent hydrolases superfamily. HutI family. The cofactor is Zn(2+). Fe(3+) is required as a cofactor.

It localises to the cytoplasm. It carries out the reaction 4-imidazolone-5-propanoate + H2O = N-formimidoyl-L-glutamate. The protein operates within amino-acid degradation; L-histidine degradation into L-glutamate; N-formimidoyl-L-glutamate from L-histidine: step 3/3. Catalyzes the hydrolytic cleavage of the carbon-nitrogen bond in imidazolone-5-propanoate to yield N-formimidoyl-L-glutamate. It is the third step in the universal histidine degradation pathway. The polypeptide is Imidazolonepropionase (Yersinia pseudotuberculosis serotype O:3 (strain YPIII)).